Consider the following 820-residue polypeptide: Leucine--tRNA ligase (820 aa).

The 'HIGH' region motif lies at 42–52 (PYPSGDLHMGH). The short motif at 576–580 (KMSKS) is the 'KMSKS' region element. Lysine 579 contacts ATP.

It belongs to the class-I aminoacyl-tRNA synthetase family.

Its subcellular location is the cytoplasm. It catalyses the reaction tRNA(Leu) + L-leucine + ATP = L-leucyl-tRNA(Leu) + AMP + diphosphate. This is Leucine--tRNA ligase from Coxiella burnetii (strain CbuG_Q212) (Coxiella burnetii (strain Q212)).